A 433-amino-acid polypeptide reads, in one-letter code: Homoserine O-acetyltransferase (433 aa).

One can recognise an AB hydrolase-1 domain in the interval 41 to 385 (NVVLVCHALT…HGHDAFLVEP (345 aa)). A disordered region spans residues 55 to 74 (VARSPAPERNEGTRGAGQAG). Ser-166 (nucleophile) is an active-site residue. Arg-237 is a binding site for substrate. Active-site residues include Asp-345 and His-378. Asp-379 lines the substrate pocket. Residues 403 to 433 (RAVSDDGGGGGNDSARPERDHAPVHASLFKG) form a disordered region.

Belongs to the AB hydrolase superfamily. MetX family. In terms of assembly, homodimer.

Its subcellular location is the cytoplasm. It catalyses the reaction L-homoserine + acetyl-CoA = O-acetyl-L-homoserine + CoA. It functions in the pathway amino-acid biosynthesis; L-methionine biosynthesis via de novo pathway; O-acetyl-L-homoserine from L-homoserine: step 1/1. Transfers an acetyl group from acetyl-CoA to L-homoserine, forming acetyl-L-homoserine. In Halorubrum lacusprofundi (strain ATCC 49239 / DSM 5036 / JCM 8891 / ACAM 34), this protein is Homoserine O-acetyltransferase.